The chain runs to 355 residues: Uroporphyrinogen decarboxylase (355 aa).

Substrate contacts are provided by residues 27–31, D78, Y155, T210, and H328; that span reads RQAGR.

The protein belongs to the uroporphyrinogen decarboxylase family. As to quaternary structure, homodimer.

The protein resides in the cytoplasm. The catalysed reaction is uroporphyrinogen III + 4 H(+) = coproporphyrinogen III + 4 CO2. It participates in porphyrin-containing compound metabolism; protoporphyrin-IX biosynthesis; coproporphyrinogen-III from 5-aminolevulinate: step 4/4. Functionally, catalyzes the decarboxylation of four acetate groups of uroporphyrinogen-III to yield coproporphyrinogen-III. The polypeptide is Uroporphyrinogen decarboxylase (Pseudomonas fluorescens (strain SBW25)).